The sequence spans 102 residues: Small ribosomal subunit protein uS10 (102 aa).

The protein belongs to the universal ribosomal protein uS10 family. In terms of assembly, part of the 30S ribosomal subunit.

In terms of biological role, involved in the binding of tRNA to the ribosomes. The protein is Small ribosomal subunit protein uS10 of Pelobacter propionicus (strain DSM 2379 / NBRC 103807 / OttBd1).